The primary structure comprises 336 residues: Anthranilate phosphoribosyltransferase (336 aa).

Residues G83, G86–D87, T91, N93–T96, K111–S119, and S123 each bind 5-phospho-alpha-D-ribose 1-diphosphate. G83 serves as a coordination point for anthranilate. S95 contacts Mg(2+). N114 is a binding site for anthranilate. R169 serves as a coordination point for anthranilate. Positions 227 and 228 each coordinate Mg(2+).

Belongs to the anthranilate phosphoribosyltransferase family. Homodimer. Requires Mg(2+) as cofactor.

The catalysed reaction is N-(5-phospho-beta-D-ribosyl)anthranilate + diphosphate = 5-phospho-alpha-D-ribose 1-diphosphate + anthranilate. The protein operates within amino-acid biosynthesis; L-tryptophan biosynthesis; L-tryptophan from chorismate: step 2/5. Catalyzes the transfer of the phosphoribosyl group of 5-phosphorylribose-1-pyrophosphate (PRPP) to anthranilate to yield N-(5'-phosphoribosyl)-anthranilate (PRA). The chain is Anthranilate phosphoribosyltransferase from Vibrio campbellii (strain ATCC BAA-1116).